Reading from the N-terminus, the 311-residue chain is Methionyl-tRNA formyltransferase (311 aa).

Residue 110 to 113 coordinates (6S)-5,6,7,8-tetrahydrofolate; sequence SLLP.

This sequence belongs to the Fmt family.

The catalysed reaction is L-methionyl-tRNA(fMet) + (6R)-10-formyltetrahydrofolate = N-formyl-L-methionyl-tRNA(fMet) + (6S)-5,6,7,8-tetrahydrofolate + H(+). Attaches a formyl group to the free amino group of methionyl-tRNA(fMet). The formyl group appears to play a dual role in the initiator identity of N-formylmethionyl-tRNA by promoting its recognition by IF2 and preventing the misappropriation of this tRNA by the elongation apparatus. In Streptococcus pneumoniae (strain Taiwan19F-14), this protein is Methionyl-tRNA formyltransferase.